A 348-amino-acid chain; its full sequence is tRNA-specific 2-thiouridylase MnmA (348 aa).

ATP-binding positions include 8-15 (LLSGGVDS) and M34. C105 acts as the Nucleophile in catalysis. Cysteines 105 and 197 form a disulfide. G129 contacts ATP. Positions 147-149 (KDQ) are interaction with tRNA. C197 functions as the Cysteine persulfide intermediate in the catalytic mechanism.

Belongs to the MnmA/TRMU family.

It localises to the cytoplasm. The enzyme catalyses S-sulfanyl-L-cysteinyl-[protein] + uridine(34) in tRNA + AH2 + ATP = 2-thiouridine(34) in tRNA + L-cysteinyl-[protein] + A + AMP + diphosphate + H(+). Its function is as follows. Catalyzes the 2-thiolation of uridine at the wobble position (U34) of tRNA, leading to the formation of s(2)U34. This Fervidobacterium nodosum (strain ATCC 35602 / DSM 5306 / Rt17-B1) protein is tRNA-specific 2-thiouridylase MnmA.